Consider the following 64-residue polypeptide: Large ribosomal subunit protein bL35 (64 aa).

Positions 1–14 (MKNKTHKGTAKRVK) are enriched in basic residues. Residues 1-29 (MKNKTHKGTAKRVKVTGSGKLVREQANRR) form a disordered region.

Belongs to the bacterial ribosomal protein bL35 family.

The sequence is that of Large ribosomal subunit protein bL35 from Corynebacterium glutamicum (strain R).